A 138-amino-acid polypeptide reads, in one-letter code: Transcription antitermination protein NusB (138 aa).

This sequence belongs to the NusB family.

Functionally, involved in transcription antitermination. Required for transcription of ribosomal RNA (rRNA) genes. Binds specifically to the boxA antiterminator sequence of the ribosomal RNA (rrn) operons. This chain is Transcription antitermination protein NusB, found in Alkaliphilus oremlandii (strain OhILAs) (Clostridium oremlandii (strain OhILAs)).